The sequence spans 81 residues: MKTLLLTLVVVTIVCLDLGYTLKCNKLIPIASKTCPAGKNLCYKMFMVATPKVPVKRGCIDVCPKNSLLVKYVCCNTDRCN.

The N-terminal stretch at 1–21 (MKTLLLTLVVVTIVCLDLGYT) is a signal peptide. Intrachain disulfides connect Cys24–Cys42, Cys35–Cys59, Cys63–Cys74, and Cys75–Cys80.

This sequence belongs to the three-finger toxin family. Short-chain subfamily. Type IA cytotoxin sub-subfamily. As to quaternary structure, monomer in solution; Homodimer and oligomer in the presence of negatively charged lipids forming a pore with a size ranging between 20 and 30 Angstroms. In terms of tissue distribution, expressed by the venom gland.

The protein localises to the secreted. The protein resides in the target cell membrane. Shows cytolytic activity on many different cells by forming pore in lipid membranes. In vivo, increases heart rate or kills the animal by cardiac arrest. In addition, it binds to heparin with high affinity, interacts with Kv channel-interacting protein 1 (KCNIP1) in a calcium-independent manner, and binds to integrin alpha-V/beta-3 (ITGAV/ITGB3) with moderate affinity. The protein is Cytotoxin 3d of Naja atra (Chinese cobra).